A 384-amino-acid chain; its full sequence is Dual-specificity RNA methyltransferase RlmN (384 aa).

The active-site Proton acceptor is the Glu105. The 240-residue stretch at 111–350 (EDDRATLCVS…TIVRKTRGDD (240 aa)) folds into the Radical SAM core domain. An intrachain disulfide couples Cys118 to Cys355. [4Fe-4S] cluster contacts are provided by Cys125, Cys129, and Cys132. S-adenosyl-L-methionine is bound by residues 179 to 180 (GE), Ser211, 233 to 235 (SLH), and Asn312. Cys355 acts as the S-methylcysteine intermediate in catalysis.

Belongs to the radical SAM superfamily. RlmN family. The cofactor is [4Fe-4S] cluster.

The protein localises to the cytoplasm. It catalyses the reaction adenosine(2503) in 23S rRNA + 2 reduced [2Fe-2S]-[ferredoxin] + 2 S-adenosyl-L-methionine = 2-methyladenosine(2503) in 23S rRNA + 5'-deoxyadenosine + L-methionine + 2 oxidized [2Fe-2S]-[ferredoxin] + S-adenosyl-L-homocysteine. The catalysed reaction is adenosine(37) in tRNA + 2 reduced [2Fe-2S]-[ferredoxin] + 2 S-adenosyl-L-methionine = 2-methyladenosine(37) in tRNA + 5'-deoxyadenosine + L-methionine + 2 oxidized [2Fe-2S]-[ferredoxin] + S-adenosyl-L-homocysteine. In terms of biological role, specifically methylates position 2 of adenine 2503 in 23S rRNA and position 2 of adenine 37 in tRNAs. m2A2503 modification seems to play a crucial role in the proofreading step occurring at the peptidyl transferase center and thus would serve to optimize ribosomal fidelity. This is Dual-specificity RNA methyltransferase RlmN from Escherichia coli O157:H7.